A 560-amino-acid chain; its full sequence is Protein DETOXIFICATION 45, chloroplastic (560 aa).

A chloroplast-targeting transit peptide spans 1-75 (MESSRVVVGG…QTNPDCGVVK (75 aa)). A run of 12 helical transmembrane segments spans residues 109–129 (LVMLSLPAIAGQAIDPLTLLM), 147–167 (VSMAIFNTISKLFNIPLLSVA), 209–229 (ALVLAIGIGIFEALALSLASG), 250–270 (FLVLRALGAPAYVVSLALQGI), 280–300 (PVYCLGIGNFLAVFLFPLFIY), 308–328 (GAAISSVISQYTVAILMLILL), 353–373 (FVLGRTLSVLVTMTVATSMAA), 389–411 (VWLAVSLLTDALASSGQALIASS), 426–446 (FVLKIGVVTGIALAIVLGMSF), 466–486 (GVLFVAATQPITALAFIFDGL), 495–515 (YAACSMMVVGGISSAFMLYAP), and 523–543 (VWVGLSMFMGLRMVAGFSRLM).

Belongs to the multi antimicrobial extrusion (MATE) (TC 2.A.66.1) family. In terms of tissue distribution, ubiquitous.

It is found in the plastid. The protein resides in the chloroplast membrane. This chain is Protein DETOXIFICATION 45, chloroplastic, found in Arabidopsis thaliana (Mouse-ear cress).